The sequence spans 62 residues: Photosystem II reaction center protein Z (62 aa).

Helical transmembrane passes span 8 to 28 (TMFALIAISFLLIIGVPITFA) and 41 to 61 (FSGVSLWIVLVFAVGILNSFI).

It belongs to the PsbZ family. In terms of assembly, PSII is composed of 1 copy each of membrane proteins PsbA, PsbB, PsbC, PsbD, PsbE, PsbF, PsbH, PsbI, PsbJ, PsbK, PsbL, PsbM, PsbT, PsbY, PsbZ, Psb30/Ycf12, at least 3 peripheral proteins of the oxygen-evolving complex and a large number of cofactors. It forms dimeric complexes.

Its subcellular location is the plastid. It localises to the chloroplast thylakoid membrane. Its function is as follows. May control the interaction of photosystem II (PSII) cores with the light-harvesting antenna, regulates electron flow through the 2 photosystem reaction centers. PSII is a light-driven water plastoquinone oxidoreductase, using light energy to abstract electrons from H(2)O, generating a proton gradient subsequently used for ATP formation. The chain is Photosystem II reaction center protein Z from Welwitschia mirabilis (Tree tumbo).